A 333-amino-acid polypeptide reads, in one-letter code: Phosphate acyltransferase (333 aa).

It belongs to the PlsX family. In terms of assembly, homodimer. Probably interacts with PlsY.

The protein resides in the cytoplasm. The enzyme catalyses a fatty acyl-[ACP] + phosphate = an acyl phosphate + holo-[ACP]. The protein operates within lipid metabolism; phospholipid metabolism. Its function is as follows. Catalyzes the reversible formation of acyl-phosphate (acyl-PO(4)) from acyl-[acyl-carrier-protein] (acyl-ACP). This enzyme utilizes acyl-ACP as fatty acyl donor, but not acyl-CoA. In Helicobacter hepaticus (strain ATCC 51449 / 3B1), this protein is Phosphate acyltransferase.